Consider the following 365-residue polypeptide: MADLRRSPLYGRHVDLGAKMAGFGGWEMPIEYAGRGVLAEHQAVRGAVGIFDVSHLGKAEVTGAGAAEFVNACLSNDLGRIAPGQAQYTLCCNDEGGVVDDLIAYLFSGERVLLVPNAANNAEVVARLAAAAPAGVSVTDRHTGFGVLAVQGPAAPTLVAALGLPTDGAYMSFVEAAWKGRPVIVCRSGYTGERGYELLPRWDDTPALWDALFAAGEGLGASPVGLGARDTLRTEMGYPLHGQDLSPTITPVQARSGWAVGWGKERFWGREALLAERAAGPARLLWGLASTGRAIPRPHMPVTAADGAPVGEVTSGTFSPTLRQGIGLALLDRGVAEGDTVNVDVRGRPGPMTVVRPPFVPSTPR.

The protein belongs to the GcvT family. In terms of assembly, the glycine cleavage system is composed of four proteins: P, T, L and H.

The catalysed reaction is N(6)-[(R)-S(8)-aminomethyldihydrolipoyl]-L-lysyl-[protein] + (6S)-5,6,7,8-tetrahydrofolate = N(6)-[(R)-dihydrolipoyl]-L-lysyl-[protein] + (6R)-5,10-methylene-5,6,7,8-tetrahydrofolate + NH4(+). The glycine cleavage system catalyzes the degradation of glycine. The polypeptide is Aminomethyltransferase (Frankia alni (strain DSM 45986 / CECT 9034 / ACN14a)).